Here is a 117-residue protein sequence, read N- to C-terminus: UPF0342 protein GWCH70_0629 (117 aa).

It belongs to the UPF0342 family.

This Geobacillus sp. (strain WCH70) protein is UPF0342 protein GWCH70_0629.